Reading from the N-terminus, the 209-residue chain is Imidazoleglycerol-phosphate dehydratase (209 aa).

The protein belongs to the imidazoleglycerol-phosphate dehydratase family.

The protein resides in the cytoplasm. The enzyme catalyses D-erythro-1-(imidazol-4-yl)glycerol 3-phosphate = 3-(imidazol-4-yl)-2-oxopropyl phosphate + H2O. It participates in amino-acid biosynthesis; L-histidine biosynthesis; L-histidine from 5-phospho-alpha-D-ribose 1-diphosphate: step 6/9. This is Imidazoleglycerol-phosphate dehydratase from Nostoc sp. (strain PCC 7120 / SAG 25.82 / UTEX 2576).